Consider the following 253-residue polypeptide: Putative ankyrin repeat protein NMB1133/NMB1171 (253 aa).

2 ANK repeats span residues 196–225 and 229–252; these read DGYTPLHHEAIAGNALMVQAMLEYGANPAS and EGYTALDFACLTGWQNVADLLEPR.

The polypeptide is Putative ankyrin repeat protein NMB1133/NMB1171 (Neisseria meningitidis serogroup B (strain ATCC BAA-335 / MC58)).